Reading from the N-terminus, the 206-residue chain is Protein GrpE (206 aa).

A disordered region spans residues 1 to 36 (MTDSNGPKDNNQDQAQAAADPVVSKPYIMPDDPEDG).

The protein belongs to the GrpE family. As to quaternary structure, homodimer.

The protein resides in the cytoplasm. Functionally, participates actively in the response to hyperosmotic and heat shock by preventing the aggregation of stress-denatured proteins, in association with DnaK and GrpE. It is the nucleotide exchange factor for DnaK and may function as a thermosensor. Unfolded proteins bind initially to DnaJ; upon interaction with the DnaJ-bound protein, DnaK hydrolyzes its bound ATP, resulting in the formation of a stable complex. GrpE releases ADP from DnaK; ATP binding to DnaK triggers the release of the substrate protein, thus completing the reaction cycle. Several rounds of ATP-dependent interactions between DnaJ, DnaK and GrpE are required for fully efficient folding. In Rhodopseudomonas palustris (strain HaA2), this protein is Protein GrpE.